The primary structure comprises 314 residues: Polyadenylate-binding protein-interacting protein 8 (314 aa).

Positions 1-47 are disordered; sequence MAAITEMATDSNDVINDGGTGDGIEKSTDSKPEIESDDLKPKSKPEY. Over residues 23-47 the composition is skewed to basic and acidic residues; the sequence is GIEKSTDSKPEIESDDLKPKSKPEY. A PAM2-like motif is present at residues 59-69; that stretch reads KLNPEAKEFFP. A Bipartite nuclear localization signal motif is present at residues 99–112; sequence RRRRNNYNQGRRVR. RRM domains lie at 128–203 and 225–301; these read RTVY…PSKT and RTIY…PSKT.

Interacts with MPC. Expressed in cauline leaves, stems, rosette leaves, immature siliques and primary inflorescences but at a low level.

The protein localises to the nucleus. This Arabidopsis thaliana (Mouse-ear cress) protein is Polyadenylate-binding protein-interacting protein 8 (CID8).